A 364-amino-acid polypeptide reads, in one-letter code: Putative agmatine deiminase (364 aa).

Cys-355 functions as the Amidino-cysteine intermediate in the catalytic mechanism.

The protein belongs to the agmatine deiminase family.

The catalysed reaction is agmatine + H2O = N-carbamoylputrescine + NH4(+). In Mycoplasma capricolum subsp. capricolum (strain California kid / ATCC 27343 / NCTC 10154), this protein is Putative agmatine deiminase.